The sequence spans 1954 residues: Protein GREB1 (1954 aa).

3 disordered regions span residues leucine 48–proline 83, leucine 238–glutamate 342, and lysine 1083–serine 1235. The segment covering asparagine 59–glycine 68 has biased composition (acidic residues). A compositionally biased stretch (low complexity) spans serine 292 to leucine 303. 2 stretches are compositionally biased toward basic and acidic residues: residues lysine 1083–serine 1099 and glycine 1122–aspartate 1133. Over residues serine 1134–serine 1146 the composition is skewed to low complexity. Residues arginine 1187–serine 1196 are compositionally biased toward polar residues. Positions serine 1224 to serine 1235 are enriched in low complexity. A helical transmembrane segment spans residues aspartate 1873–leucine 1893.

The protein belongs to the GREB1 family.

Its subcellular location is the membrane. May play a role in estrogen-stimulated cell proliferation. This chain is Protein GREB1 (Greb1), found in Mus musculus (Mouse).